Here is a 375-residue protein sequence, read N- to C-terminus: MNEEEAPSEQKKTLSLVPSPTTNLFLPDDILLSSLSRISRLYYPTFSLVSKSFRSLIASPELYQTRSILGRTESCLYVSLRLLNDSNLRWYTLCRVPDRKLTNFSGGHLLVPILSRYAPPAHWSSVVAVDYNIYAIGGPINDAPSSSVSVLDCQCEKWREAPSMRVARNYPTATVLDGKIYVAGGCEDCTSLDCIEVFDPKTQTWDSVASPGTERCERLVYKSVGIEGKYHLFGGAGHVAYDPKEGRWDSVGMDMEMGRTWVSYCVINNILFYYNDREFKWYDYKGRFWRKLMGLERLIKFLCYSRVNLAAYGEKMAVLWDTFVPSSSKNKMIWCAEITIERHDIYEICGKTEWFDVVLRVPKSYELVHVLAATV.

The F-box domain occupies 20-66 (PTTNLFLPDDILLSSLSRISRLYYPTFSLVSKSFRSLIASPELYQTR). Kelch repeat units follow at residues 132-178 (NIYA…VLDG), 179-225 (KIYV…KSVG), and 229-269 (KYHL…VINN).

This Arabidopsis thaliana (Mouse-ear cress) protein is F-box/kelch-repeat protein At4g39580.